The sequence spans 311 residues: N-acetyl-gamma-glutamyl-phosphate reductase (311 aa).

Cys117 is a catalytic residue.

The protein belongs to the NAGSA dehydrogenase family. Type 2 subfamily.

The protein localises to the cytoplasm. The enzyme catalyses N-acetyl-L-glutamate 5-semialdehyde + phosphate + NADP(+) = N-acetyl-L-glutamyl 5-phosphate + NADPH + H(+). It functions in the pathway amino-acid biosynthesis; L-arginine biosynthesis; N(2)-acetyl-L-ornithine from L-glutamate: step 3/4. In terms of biological role, catalyzes the NADPH-dependent reduction of N-acetyl-5-glutamyl phosphate to yield N-acetyl-L-glutamate 5-semialdehyde. The sequence is that of N-acetyl-gamma-glutamyl-phosphate reductase from Brucella anthropi (strain ATCC 49188 / DSM 6882 / CCUG 24695 / JCM 21032 / LMG 3331 / NBRC 15819 / NCTC 12168 / Alc 37) (Ochrobactrum anthropi).